Here is a 378-residue protein sequence, read N- to C-terminus: 3-dehydroquinate synthase (378 aa).

NAD(+) contacts are provided by residues Gly-115–Asp-119, Thr-139–Ser-140, Lys-152, and Lys-161. Residues Glu-194, His-256, and His-275 each coordinate Zn(2+).

The protein belongs to the sugar phosphate cyclases superfamily. Dehydroquinate synthase family. Co(2+) is required as a cofactor. The cofactor is Zn(2+). Requires NAD(+) as cofactor.

The protein resides in the cytoplasm. It catalyses the reaction 7-phospho-2-dehydro-3-deoxy-D-arabino-heptonate = 3-dehydroquinate + phosphate. The protein operates within metabolic intermediate biosynthesis; chorismate biosynthesis; chorismate from D-erythrose 4-phosphate and phosphoenolpyruvate: step 2/7. Functionally, catalyzes the conversion of 3-deoxy-D-arabino-heptulosonate 7-phosphate (DAHP) to dehydroquinate (DHQ). In Brucella abortus biovar 1 (strain 9-941), this protein is 3-dehydroquinate synthase.